Consider the following 833-residue polypeptide: MTFYNHKEIEPKWQDFWAKNHTFKTGTDSSKPKFYALDMFPYPSGAGLHVGHPEGYTATDILSRFKRAQGYNVLHPMGWDAFGLPAEQYAMDTGNDPADFTAENIANFKRQINSLGFSYDWDREVNTTDPNYYKWTQWIFTKLYEKGLAYEAEVPVNWVEELGTAIANEEVLPDGTSERGGYPVVRKPMRQWMLKITAYAERLLEDLEEVDWPESIKDMQRNWIGKSVGANITFNVKDSEESFTVFTTRPDTLFGATYAVLAPEHALVDAITTEEQAEAIAEYKRQASLKSDLARTDLAKEKTGVWTGAYAINPVNGKEMPIWIADYVLSSYGTGAIMAVPAHDERDWEFAKQFHLDIIPVLEGGNVQEAAYTEDGLHINSDFLDGLNKEEAIAKTVAWLEEKEVGNEKVSYRLRDWLFSRQRYWGEPIPIIHWEDGTSTAVPEDQLPLILPVTKDIHPSGTGESPLANITDWLEVTREDGVKGRRETNTMPQWAGSSWYYLRYIDPKNDKAIADPDLLKQWLPVDIYVGGAEHAVLHLLYARFWHKVLYDLGVVPTKEPFQKLFNQGMILGTSYRDHRGALVATDKVEKREGSYFHIETGEELEQAPAKMSKSLKNVVNPDDVVEQYGADTLRVYEMFMGPLDASIAWSEEGLEGSRKFLDRVYRLITTKEMTGDNSGALDKVYHETVKAVTEQIESMKFNTAIAQLMIFVNAANKEDKLYKEQAKGFVQLIAPFAPHLGEELWQVLTDSNQSISHVAWPTWDENKLVENDVEIVVQIKGKVKAKLVLAKDLSKEELEAAALSHEKIQAEIAGKEIVKVIAVPNKLVNIVVK.

Residues 41-52 (PYPSGAGLHVGH) carry the 'HIGH' region motif. The short motif at 610–614 (KMSKS) is the 'KMSKS' region element. Residue Lys613 participates in ATP binding.

The protein belongs to the class-I aminoacyl-tRNA synthetase family.

It localises to the cytoplasm. It catalyses the reaction tRNA(Leu) + L-leucine + ATP = L-leucyl-tRNA(Leu) + AMP + diphosphate. This Streptococcus uberis (strain ATCC BAA-854 / 0140J) protein is Leucine--tRNA ligase.